Here is a 298-residue protein sequence, read N- to C-terminus: NADH-cytochrome b5 reductase 1 (298 aa).

A helical transmembrane segment spans residues 14 to 34; it reads VILAGAYLIDPSALPFVAAGV. Residues 56–159 enclose the FAD-binding FR-type domain; it reads KEYRKFKLVD…RGPKGQFSYT (104 aa). FAD is bound by residues 139-154 and 165-197; these read SELS…GPKG and AIGM…QVNF.

The protein belongs to the flavoprotein pyridine nucleotide cytochrome reductase family. As to quaternary structure, monomer. Component of the 2-(3-amino-3-carboxypropyl)histidine synthase complex composed of DPH1, DPH2, DPH3 and a NADH-dependent reductase, predominantly CBR1. FAD is required as a cofactor.

The protein localises to the mitochondrion outer membrane. The enzyme catalyses 2 Fe(III)-[cytochrome b5] + NADH = 2 Fe(II)-[cytochrome b5] + NAD(+) + H(+). It carries out the reaction 2 Fe(3+)-[Dph3] + NADH = 2 Fe(2+)-[Dph3] + NAD(+) + H(+). The protein operates within protein modification; peptidyl-diphthamide biosynthesis. Its function is as follows. NADH-dependent reductase for DPH3 and cytochrome b5. Required for the first step of diphthamide biosynthesis, a post-translational modification of histidine which occurs in elongation factor 2. DPH1 and DPH2 transfer a 3-amino-3-carboxypropyl (ACP) group from S-adenosyl-L-methionine (SAM) to a histidine residue, the reaction is assisted by a reduction system comprising DPH3 and a NADH-dependent reductase, predominantly CBR1. By reducing DPH3, also involved in the formation of the tRNA wobble base modification mcm5s 2U (5-methoxycarbonylmethyl-2-thiouridine), mediated by the elongator complex. The cytochrome b5/NADH cytochrome b5 reductase electron transfer system supports the catalytic activity of several sterol biosynthetic enzymes. This is NADH-cytochrome b5 reductase 1 (CBR1) from Mortierella alpina (Oleaginous fungus).